The primary structure comprises 147 residues: Myoglobin (147 aa).

The Globin domain occupies 2 to 141 (ADFDMVLKCW…IIADMEADYK (140 aa)). His60 lines the nitrite pocket. Position 60 (His60) interacts with O2. His89 lines the heme b pocket.

Belongs to the globin family. In terms of assembly, monomeric.

The protein resides in the cytoplasm. Its subcellular location is the sarcoplasm. It catalyses the reaction Fe(III)-heme b-[protein] + nitric oxide + H2O = Fe(II)-heme b-[protein] + nitrite + 2 H(+). The enzyme catalyses H2O2 + AH2 = A + 2 H2O. Monomeric heme protein which primary function is to store oxygen and facilitate its diffusion within muscle tissues. Reversibly binds oxygen through a pentacoordinated heme iron and enables its timely and efficient release as needed during periods of heightened demand. Depending on the oxidative conditions of tissues and cells, and in addition to its ability to bind oxygen, it also has a nitrite reductase activity whereby it regulates the production of bioactive nitric oxide. Under stress conditions, like hypoxia and anoxia, it also protects cells against reactive oxygen species thanks to its pseudoperoxidase activity. This is Myoglobin (mb) from Gobionotothen gibberifrons (Humped rockcod).